The primary structure comprises 182 residues: Succinate dehydrogenase cytochrome b560 subunit, mitochondrial (182 aa).

Residues 65-94 (LTWMLSGFHRISGCVMAGTLLVGGIGFAVL) form a helical membrane-spanning segment. At 95 to 114 (PFDFTAFVDFIRSWNLPCAV) the chain is on the mitochondrial intermembrane side. A helical transmembrane segment spans residues 115 to 139 (TAVFKYIIAFPIIFHTLNGIRFLGF). His-129 contacts heme. Residues 140–147 (DLAKGVNN) lie on the Mitochondrial matrix side of the membrane. The helical transmembrane segment at 148 to 169 (VGQIYKSGYLVSGLSAILALAI) threads the bilayer. Topologically, residues 170–172 (VFN) are mitochondrial intermembrane.

The protein belongs to the cytochrome b560 family. In terms of assembly, component of complex II composed of four subunits: a flavoprotein (FP), iron-sulfur protein (IP), and a cytochrome b560 composed of two integral membrane proteins. Heme serves as cofactor.

It localises to the mitochondrion inner membrane. The protein operates within carbohydrate metabolism; tricarboxylic acid cycle. Membrane-anchoring subunit of succinate dehydrogenase (SDH) that is involved in complex II of the mitochondrial electron transport chain and is responsible for transferring electrons from succinate to ubiquinone (coenzyme Q). Mediates resistance to enteropathogenic E.coli infection. This is Succinate dehydrogenase cytochrome b560 subunit, mitochondrial (mev-1) from Caenorhabditis elegans.